The primary structure comprises 173 residues: Orotate phosphoribosyltransferase (173 aa).

Residues arginine 87, lysine 88, lysine 91, and 113-121 (EDIATTGQS) contribute to the 5-phospho-alpha-D-ribose 1-diphosphate site. Positions 117 and 145 each coordinate orotate.

This sequence belongs to the purine/pyrimidine phosphoribosyltransferase family. PyrE subfamily. In terms of assembly, homodimer. It depends on Mg(2+) as a cofactor.

It carries out the reaction orotidine 5'-phosphate + diphosphate = orotate + 5-phospho-alpha-D-ribose 1-diphosphate. It participates in pyrimidine metabolism; UMP biosynthesis via de novo pathway; UMP from orotate: step 1/2. Functionally, catalyzes the transfer of a ribosyl phosphate group from 5-phosphoribose 1-diphosphate to orotate, leading to the formation of orotidine monophosphate (OMP). In Natronomonas pharaonis (strain ATCC 35678 / DSM 2160 / CIP 103997 / JCM 8858 / NBRC 14720 / NCIMB 2260 / Gabara) (Halobacterium pharaonis), this protein is Orotate phosphoribosyltransferase.